The primary structure comprises 434 residues: Serine--tRNA ligase (434 aa).

230–232 (TSE) is an L-serine binding site. ATP is bound by residues 261 to 263 (RRE) and valine 277. Position 284 (glutamate 284) interacts with L-serine. 348–351 (ELTS) provides a ligand contact to ATP. L-serine is bound at residue threonine 393.

Belongs to the class-II aminoacyl-tRNA synthetase family. Type-1 seryl-tRNA synthetase subfamily. As to quaternary structure, homodimer. The tRNA molecule binds across the dimer.

The protein localises to the cytoplasm. It carries out the reaction tRNA(Ser) + L-serine + ATP = L-seryl-tRNA(Ser) + AMP + diphosphate + H(+). The catalysed reaction is tRNA(Sec) + L-serine + ATP = L-seryl-tRNA(Sec) + AMP + diphosphate + H(+). It functions in the pathway aminoacyl-tRNA biosynthesis; selenocysteinyl-tRNA(Sec) biosynthesis; L-seryl-tRNA(Sec) from L-serine and tRNA(Sec): step 1/1. In terms of biological role, catalyzes the attachment of serine to tRNA(Ser). Is also able to aminoacylate tRNA(Sec) with serine, to form the misacylated tRNA L-seryl-tRNA(Sec), which will be further converted into selenocysteinyl-tRNA(Sec). This is Serine--tRNA ligase from Kocuria rhizophila (strain ATCC 9341 / DSM 348 / NBRC 103217 / DC2201).